Reading from the N-terminus, the 272-residue chain is Protein UL24 homolog (272 aa).

It belongs to the herpesviridae UL24 family.

It localises to the virion. It is found in the host cytoplasm. The protein localises to the host nucleus. The protein resides in the host nucleolus. Its subcellular location is the host Golgi apparatus. Functionally, may participate in nuclear egress of viral particles. Plays a role in the dispersal of several host nucleolar proteins including NCL/nucleolin and NPM1. Since deletion of host NCL/nucleolin negatively impact on nuclear egress, UL24 supposedly acts on this process through its effect on host nucleoli. This Equine herpesvirus 1 (strain V592) (EHV-1) protein is Protein UL24 homolog.